Here is a 240-residue protein sequence, read N- to C-terminus: MKRPSGRAADQLRSIRITRNYTKHAEGSVLVEFGDTKVICTVSVENGVPRFLKGQGQGWLTAEYGMLPRATGERNQREASRGKQGGRTLEIQRLIGRSLRAALDMSKLGDVTLYVDCDVIQADGGTRTASITGAMVALADALKVIKKRGGLKGGDPLKQMIAAVSVGMYQGEPVLDLDYLEDSAAETDLNVVMTSAGGFIEVQGTAEGAPFQPEELNAMLALAQKGMTELFELQRAALAD.

Phosphate contacts are provided by residues R87 and 125–127; that span reads GTR.

It belongs to the RNase PH family. In terms of assembly, homohexameric ring arranged as a trimer of dimers.

The catalysed reaction is tRNA(n+1) + phosphate = tRNA(n) + a ribonucleoside 5'-diphosphate. Phosphorolytic 3'-5' exoribonuclease that plays an important role in tRNA 3'-end maturation. Removes nucleotide residues following the 3'-CCA terminus of tRNAs; can also add nucleotides to the ends of RNA molecules by using nucleoside diphosphates as substrates, but this may not be physiologically important. Probably plays a role in initiation of 16S rRNA degradation (leading to ribosome degradation) during starvation. This Pseudomonas syringae pv. syringae (strain B728a) protein is Ribonuclease PH.